The chain runs to 266 residues: Inositol-1-monophosphatase (266 aa).

Mg(2+) is bound by residues Glu-69, Asp-86, Leu-88, and Asp-89. Position 69 (Glu-69) interacts with substrate. Residues 88–91 (LDGT), Arg-185, and Asp-214 contribute to the substrate site. Asp-214 contributes to the Mg(2+) binding site.

Belongs to the inositol monophosphatase superfamily. The cofactor is Mg(2+).

It catalyses the reaction a myo-inositol phosphate + H2O = myo-inositol + phosphate. The protein is Inositol-1-monophosphatase (suhB) of Rhizobium meliloti (strain 1021) (Ensifer meliloti).